The primary structure comprises 265 residues: Insulin-like growth factor-binding protein 2-B (265 aa).

An N-terminal signal peptide occupies residues 1–17; it reads MSLALLCSLLLVHGSLG. The region spanning 19-99 is the IGFBP N-terminal domain; that stretch reads IVFRCPSCTA…IQGLGRCENK (81 aa). 6 disulfides stabilise this stretch: Cys23–Cys49, Cys26–Cys51, Cys34–Cys52, Cys41–Cys55, Cys63–Cys76, and Cys70–Cys96. The span at 107–122 shows a compositional bias: polar residues; the sequence is TNQESAAHSGEVNGTR. Disordered regions lie at residues 107–128 and 144–170; these read TNQE…PMKK and HHNN…SQCQ. One can recognise a Thyroglobulin type-1 domain in the interval 166 to 248; it reads QSQCQQELDK…SDKVRGDPNC (83 aa). 3 cysteine pairs are disulfide-bonded: Cys169–Cys203, Cys214–Cys225, and Cys227–Cys248. Positions 238–265 are disordered; sequence SSDKVRGDPNCSQYYGGPELEPPTAQQK. The short motif at 243–245 is the Cell attachment site element; sequence RGD.

As to quaternary structure, interacts with igf2. Interacts with igf1. As to expression, in early embryos, expressed at a low level in most tissues with expression becoming abundant in the liver by 96 hours post-fertilization (hpf). The expression pattern in adults exhibits sexual dimorphism; in adult males expression is limited exclusively to the liver whereas in adult females expression is observed in the liver and other tissues including the gut, kidney, ovary and muscle.

It is found in the secreted. Functionally, IGF-binding proteins prolong the half-life of the IGFs and have been shown to either inhibit or stimulate the growth promoting effects of the IGFs on cell culture. They alter the interaction of IGFs with their cell surface receptors. The sequence is that of Insulin-like growth factor-binding protein 2-B from Danio rerio (Zebrafish).